A 128-amino-acid chain; its full sequence is Glycine cleavage system H protein (128 aa).

One can recognise a Lipoyl-binding domain in the interval 24–106 (VYSVGITEHA…YTDGWLFSIK (83 aa)). Position 65 is an N6-lipoyllysine (Lys65).

The protein belongs to the GcvH family. The glycine cleavage system is composed of four proteins: P, T, L and H. (R)-lipoate is required as a cofactor.

In terms of biological role, the glycine cleavage system catalyzes the degradation of glycine. The H protein shuttles the methylamine group of glycine from the P protein to the T protein. The sequence is that of Glycine cleavage system H protein from Yersinia pseudotuberculosis serotype O:1b (strain IP 31758).